Here is a 421-residue protein sequence, read N- to C-terminus: MLDIKRIRNNPEEIVEALKKRRGEYPIQKLLATDEKRREVIQKVESMKAEQNKLSKQVPQMKKNGEDTTELFKNLKKLSDDIKNLDDDLKDIDDEIREYLMEIPNTPNKDVPVGLDDTENLEMRKWGEPRKFDFDIKAHWDLGVDLDILDFERATKISKSRFSVFKGKGARLERALMNFMVDLHTDKQGYTEMNTPVLMSPSAMMGTGQIPKFKEDMFYCEKDDMYLAPTAEVPVTNLLGGEILEQGSLPIYYTAFTQCFRREAGSAGRDTRGLIRNHQFEKVEMVKFVEPSTSYDELEKLTNNAEEILQLLEIPYRVVRLCSGDLGFSSAMTYDIEVWMPSYNRYVEISSCSNFEDFQARRANIRYRDENNKPQYVHTLNGSGLAIGRCFAAVIENYQQADGSIKIPEVLQKYTGFDIID.

230-232 (TAE) contributes to the L-serine binding site. Residue 261–263 (RRE) coordinates ATP. An L-serine-binding site is contributed by glutamate 284. 348 to 351 (EISS) contributes to the ATP binding site. Serine 383 lines the L-serine pocket.

This sequence belongs to the class-II aminoacyl-tRNA synthetase family. Type-1 seryl-tRNA synthetase subfamily. In terms of assembly, homodimer. The tRNA molecule binds across the dimer.

Its subcellular location is the cytoplasm. It carries out the reaction tRNA(Ser) + L-serine + ATP = L-seryl-tRNA(Ser) + AMP + diphosphate + H(+). It catalyses the reaction tRNA(Sec) + L-serine + ATP = L-seryl-tRNA(Sec) + AMP + diphosphate + H(+). It functions in the pathway aminoacyl-tRNA biosynthesis; selenocysteinyl-tRNA(Sec) biosynthesis; L-seryl-tRNA(Sec) from L-serine and tRNA(Sec): step 1/1. Catalyzes the attachment of serine to tRNA(Ser). Is also able to aminoacylate tRNA(Sec) with serine, to form the misacylated tRNA L-seryl-tRNA(Sec), which will be further converted into selenocysteinyl-tRNA(Sec). This chain is Serine--tRNA ligase, found in Finegoldia magna (strain ATCC 29328 / DSM 20472 / WAL 2508) (Peptostreptococcus magnus).